A 207-amino-acid polypeptide reads, in one-letter code: 8-oxoguanine DNA glycosylase/AP lyase (207 aa).

Active-site residues include Lys-129 and Asp-147.

The protein belongs to the type-2 OGG1 family.

The catalysed reaction is 2'-deoxyribonucleotide-(2'-deoxyribose 5'-phosphate)-2'-deoxyribonucleotide-DNA = a 3'-end 2'-deoxyribonucleotide-(2,3-dehydro-2,3-deoxyribose 5'-phosphate)-DNA + a 5'-end 5'-phospho-2'-deoxyribonucleoside-DNA + H(+). Functionally, catalyzes the excision of an oxidatively damaged form of guanine (7,8-dihydro-8-oxoguanine = 8-oxoG) from DNA. Also cleaves the DNA backbone at apurinic/apyrimidinic sites (AP sites). The chain is 8-oxoguanine DNA glycosylase/AP lyase from Thermotoga maritima (strain ATCC 43589 / DSM 3109 / JCM 10099 / NBRC 100826 / MSB8).